Reading from the N-terminus, the 288-residue chain is 4-hydroxy-tetrahydrodipicolinate synthase (288 aa).

Residue Thr-42 participates in pyruvate binding. Tyr-129 serves as the catalytic Proton donor/acceptor. Lys-158 (schiff-base intermediate with substrate) is an active-site residue. Position 200 (Ile-200) interacts with pyruvate.

It belongs to the DapA family. In terms of assembly, homotetramer; dimer of dimers.

It localises to the cytoplasm. The enzyme catalyses L-aspartate 4-semialdehyde + pyruvate = (2S,4S)-4-hydroxy-2,3,4,5-tetrahydrodipicolinate + H2O + H(+). It participates in amino-acid biosynthesis; L-lysine biosynthesis via DAP pathway; (S)-tetrahydrodipicolinate from L-aspartate: step 3/4. In terms of biological role, catalyzes the condensation of (S)-aspartate-beta-semialdehyde [(S)-ASA] and pyruvate to 4-hydroxy-tetrahydrodipicolinate (HTPA). The chain is 4-hydroxy-tetrahydrodipicolinate synthase from Thermosipho melanesiensis (strain DSM 12029 / CIP 104789 / BI429).